We begin with the raw amino-acid sequence, 404 residues long: L-cysteine:1D-myo-inositol 2-amino-2-deoxy-alpha-D-glucopyranoside ligase (404 aa).

Cys-35 contributes to the Zn(2+) binding site. L-cysteinyl-5'-AMP-binding positions include 35–38, Thr-50, and 73–75; these read CGIT and NVT. The 'HIGH' region motif lies at 37–47; that stretch reads ITPYDATHLGH. Positions 178–183 match the 'ERGGDP' region motif; it reads ERGGDP. Trp-219 lines the L-cysteinyl-5'-AMP pocket. Zn(2+) is bound at residue Cys-223. 241-243 is an L-cysteinyl-5'-AMP binding site; sequence GND. Position 248 (His-248) interacts with Zn(2+). Ile-275 is an L-cysteinyl-5'-AMP binding site. The 'KMSKS' region motif lies at 281 to 285; it reads KMSKS.

The protein belongs to the class-I aminoacyl-tRNA synthetase family. MshC subfamily. As to quaternary structure, monomer. Requires Zn(2+) as cofactor.

It catalyses the reaction 1D-myo-inositol 2-amino-2-deoxy-alpha-D-glucopyranoside + L-cysteine + ATP = 1D-myo-inositol 2-(L-cysteinylamino)-2-deoxy-alpha-D-glucopyranoside + AMP + diphosphate + H(+). In terms of biological role, catalyzes the ATP-dependent condensation of GlcN-Ins and L-cysteine to form L-Cys-GlcN-Ins. This chain is L-cysteine:1D-myo-inositol 2-amino-2-deoxy-alpha-D-glucopyranoside ligase, found in Salinispora tropica (strain ATCC BAA-916 / DSM 44818 / JCM 13857 / NBRC 105044 / CNB-440).